The following is a 31-amino-acid chain: Basic phospholipase A2 13 (31 aa).

The protein belongs to the phospholipase A2 family. Group I subfamily. Ca(2+) is required as a cofactor. As to expression, expressed by the venom gland.

It localises to the secreted. The catalysed reaction is a 1,2-diacyl-sn-glycero-3-phosphocholine + H2O = a 1-acyl-sn-glycero-3-phosphocholine + a fatty acid + H(+). Snake venom phospholipase A2 (PLA2) that inhibits neuromuscular transmission by blocking acetylcholine release from the nerve termini. PLA2 catalyzes the calcium-dependent hydrolysis of the 2-acyl groups in 3-sn-phosphoglycerides. This is Basic phospholipase A2 13 from Bungarus fasciatus (Banded krait).